The chain runs to 138 residues: Protein Rrf1 (138 aa).

The region spanning 4–116 (RILVVQEDPD…LLLALVDRAL (113 aa)) is the Response regulatory domain. 2 positions are modified to 4-aspartylphosphate: D13 and D53.

Its function is as follows. May be involved in regulation of gene transcription. Belongs to the family of response regulators, and members of this family involved in the regulation of gene transcription are two-domain proteins. This protein contains only the N-terminal phosphorylation domain and not the C-terminal DNA-binding domain but it may bind to Rrf2 protein and the latter may bind to DNA. In Nitratidesulfovibrio vulgaris (strain ATCC 29579 / DSM 644 / CCUG 34227 / NCIMB 8303 / VKM B-1760 / Hildenborough) (Desulfovibrio vulgaris), this protein is Protein Rrf1 (rrf1).